The sequence spans 615 residues: MTTLDSNNNTGGVITYIGSSGSSPSRTSPESLYSDSSNGSFQSLTQGCPTYFPPSPTGSLTQDPARSFGSAPPSLSDDSSPSSASSSSSSSSSSFYNGSPPGSLQVAMEDSSRVSPSKGTSNITKLNGMVLLCKVCGDVASGFHYGVHACEGCKGFFRRSIQQNIQYKRCLKNENCSIVRINRNRCQQCRFKKCLSVGMSRDAVRFGRIPKREKQRMLAEMQSAMNLANNQLSSLCPLETSPTPHPTSGSMGPSPPPAPAPTPLVGFSQFPQQLTPPRSPSPEPTMEDVISQVARAHREIFTYAHDKLGTSPGNFNANHASGSPSATTPHRWESQGCPSAPNDNNLLAAQRHNEALNGLRQGPSSYPPTWPSGPTHHSCHQPNSNGHRLCPTHVYSAPEGEAPANSLRQGNTKNVLLACPMNMYPHGRSGRTVQEIWEDFSMSFTPAVREVVEFAKHIPGFRDLSQHDQVTLLKAGTFEVLMVRFASLFNVKDQTVMFLSRTTYSLQELGAMGMGDLLNAMFDFSEKLNSLALTEEELGLFTAVVLVSADRSGMENSASVEQLQETLLRALRALVLKNRPSETSRFTKLLLKLPDLRTLNNMHSEKLLSFRVDAQ.

The segment covering methionine 1–glycine 12 has biased composition (polar residues). The tract at residues methionine 1–serine 70 is required for phosphorylation by CSNK1E and cytoplasmic localization. The interval methionine 1 to threonine 120 is disordered. The tract at residues methionine 1–methionine 129 is modulating. A compositionally biased stretch (low complexity) spans isoleucine 14 to serine 34. Residues aspartate 35–cysteine 48 are compositionally biased toward polar residues. A crucial for activation of GJA1 region spans residues proline 49–threonine 285. 2 positions are modified to phosphoserine; by GSK3-beta: serine 55 and serine 59. Over residues serine 70–serine 94 the composition is skewed to low complexity. The segment at residues valine 130–phenylalanine 206 is a DNA-binding region (nuclear receptor). 2 consecutive NR C4-type zinc fingers follow at residues cysteine 133–cysteine 153 and cysteine 170–cysteine 194. N6-acetyllysine; by KAT5 is present on residues lysine 192 and lysine 193. Disordered stretches follow at residues leucine 235–methionine 286 and proline 312–cysteine 337. Residues threonine 240–glycine 252 show a composition bias toward low complexity. Over residues proline 253–threonine 262 the composition is skewed to pro residues. A Phosphothreonine; by CDK1 modification is found at threonine 275. The region spanning threonine 285–glutamine 615 is the NR LBD domain. Residues proline 312 to threonine 328 are compositionally biased toward polar residues. Residue cysteine 419 participates in heme binding. N6-acetyllysine is present on lysine 592. Histidine 603 lines the heme pocket.

It belongs to the nuclear hormone receptor family. NR1 subfamily. Binds DNA as a monomer or a homodimer. Interacts with NR2E3 and ZNHIT1. Interacts with C1D. Interacts with SP1. Interacts with OPHN1 (via C-terminus). Interacts with PER2; the interaction associates PER2 to BMAL1 promoter region. Interacts with CRY1. Interacts with CCAR2. Interacts with SIAH2. Interacts with FBXW7 and CDK1. Interacts with HUWE1. Interacts with NR0B2. Interacts with NFIL3. Interacts (via domain NR LBD) with HSP90AA1 and HSP90AB1. Ubiquitinated, leading to its proteasomal degradation. Ubiquitinated by the SCF(FBXW7) complex when phosphorylated by CDK1 leading to its proteasomal degradation. Ubiquitinated by SIAH2; leading to its proteasomal degradation. Rapidly ubiquitinated in response to inflammatory triggers and sumoylation is a prerequisite to its ubiquitination. Post-translationally, sumoylated by UBE2I, desumoylated by SENP1, and sumoylation is a prerequisite to its ubiquitination. In terms of processing, phosphorylated by CSNK1E; phosphorylation enhances its cytoplasmic localization. Undergoes lysosome-mediated degradation in a time-dependent manner in the liver. In terms of tissue distribution, expressed during adipocyte differentiation (at protein level). Expressed in skeletal muscle, bladder, lumbar spinal cord, pancreatic islets and hypothalamus. Expressed in developing and adult retina. In the adult retina, predominantly expressed in the outer nuclear layer, where rod and cone cells reside, and also localized to the ganglion cell layer. Expressed in a circadian manner in the liver. Expressed in a circadian manner in the lung with a peak between ZT8 and ZT12.

The protein resides in the nucleus. It is found in the cytoplasm. It localises to the cell projection. Its subcellular location is the dendrite. The protein localises to the dendritic spine. Its function is as follows. Transcriptional repressor which coordinates circadian rhythm and metabolic pathways in a heme-dependent manner. Integral component of the complex transcription machinery that governs circadian rhythmicity and forms a critical negative limb of the circadian clock by directly repressing the expression of core clock components BMAL1, CLOCK and CRY1. Also regulates genes involved in metabolic functions, including lipid and bile acid metabolism, adipogenesis, gluconeogenesis and the macrophage inflammatory response. Acts as a receptor for heme which stimulates its interaction with the NCOR1/HDAC3 corepressor complex, enhancing transcriptional repression. Recognizes two classes of DNA response elements within the promoter of its target genes and can bind to DNA as either monomers or homodimers, depending on the nature of the response element. Binds as a monomer to a response element composed of the consensus half-site motif 5'-[A/G]GGTCA-3' preceded by an A/T-rich 5' sequence (RevRE), or as a homodimer to a direct repeat of the core motif spaced by two nucleotides (RevDR-2). Acts as a potent competitive repressor of ROR alpha (RORA) function and regulates the levels of its ligand heme by repressing the expression of PPARGC1A, a potent inducer of heme synthesis. Regulates lipid metabolism by repressing the expression of APOC3 and by influencing the activity of sterol response element binding proteins (SREBPs); represses INSIG2 which interferes with the proteolytic activation of SREBPs which in turn govern the rhythmic expression of enzymes with key functions in sterol and fatty acid synthesis. Regulates gluconeogenesis via repression of G6PC1 and PEPCK and adipocyte differentiation via repression of PPARG. Regulates glucagon release in pancreatic alpha-cells via the AMPK-NAMPT-SIRT1 pathway and the proliferation, glucose-induced insulin secretion and expression of key lipogenic genes in pancreatic-beta cells. Positively regulates bile acid synthesis by increasing hepatic expression of CYP7A1 via repression of NR0B2 and NFIL3 which are negative regulators of CYP7A1. Modulates skeletal muscle oxidative capacity by regulating mitochondrial biogenesis and autophagy; controls mitochondrial biogenesis and respiration by interfering with the STK11-PRKAA1/2-SIRT1-PPARGC1A signaling pathway. Represses the expression of SERPINE1/PAI1, an important modulator of cardiovascular disease and the expression of inflammatory cytokines and chemokines in macrophages. Represses gene expression at a distance in macrophages by inhibiting the transcription of enhancer-derived RNAs (eRNAs). Plays a role in the circadian regulation of body temperature and negatively regulates thermogenic transcriptional programs in brown adipose tissue (BAT); imposes a circadian oscillation in BAT activity, increasing body temperature when awake and depressing thermogenesis during sleep. In concert with NR2E3, regulates transcriptional networks critical for photoreceptor development and function. In addition to its activity as a repressor, can also act as a transcriptional activator. In the ovarian granulosa cells acts as a transcriptional activator of STAR which plays a role in steroid biosynthesis. In collaboration with SP1, activates GJA1 transcription in a heme-independent manner. Represses the transcription of CYP2B10, CYP4A10 and CYP4A14. Represses the transcription of CES2. Represses and regulates the circadian expression of TSHB in a NCOR1-dependent manner. Negatively regulates the protein stability of NR3C1 and influences the time-dependent subcellular distribution of NR3C1, thereby affecting its transcriptional regulatory activity. Plays a critical role in the circadian control of neutrophilic inflammation in the lung; under resting, non-stress conditions, acts as a rhythmic repressor to limit inflammatory activity whereas in the presence of inflammatory triggers undergoes ubiquitin-mediated degradation thereby relieving inhibition of the inflammatory response. Plays a key role in the circadian regulation of microglial activation and neuroinflammation; suppresses microglial activation through the NF-kappaB pathway in the central nervous system. Plays a role in the regulation of the diurnal rhythms of lipid and protein metabolism in the skeletal muscle via transcriptional repression of genes controlling lipid and amino acid metabolism in the muscle. The chain is Nuclear receptor subfamily 1 group D member 1 (Nr1d1) from Mus musculus (Mouse).